The sequence spans 299 residues: ATP phosphoribosyltransferase (299 aa).

The protein belongs to the ATP phosphoribosyltransferase family. Long subfamily. It depends on Mg(2+) as a cofactor.

The protein localises to the cytoplasm. The enzyme catalyses 1-(5-phospho-beta-D-ribosyl)-ATP + diphosphate = 5-phospho-alpha-D-ribose 1-diphosphate + ATP. Its pathway is amino-acid biosynthesis; L-histidine biosynthesis; L-histidine from 5-phospho-alpha-D-ribose 1-diphosphate: step 1/9. With respect to regulation, feedback inhibited by histidine. Catalyzes the condensation of ATP and 5-phosphoribose 1-diphosphate to form N'-(5'-phosphoribosyl)-ATP (PR-ATP). Has a crucial role in the pathway because the rate of histidine biosynthesis seems to be controlled primarily by regulation of HisG enzymatic activity. This is ATP phosphoribosyltransferase from Shewanella pealeana (strain ATCC 700345 / ANG-SQ1).